We begin with the raw amino-acid sequence, 441 residues long: Serine carboxypeptidase-like 1 (441 aa).

The first 29 residues, 1-29 (MANKYVSSVLKSLLVLLHLVFLSKQHVDS), serve as a signal peptide directing secretion. Cystine bridges form between cysteine 88–cysteine 331, cysteine 252–cysteine 266, and cysteine 290–cysteine 297. A glycan (N-linked (GlcNAc...) asparagine) is linked at asparagine 109. Serine 184 is an active-site residue. A glycan (N-linked (GlcNAc...) asparagine) is linked at asparagine 350. Residue aspartate 366 is part of the active site. An N-linked (GlcNAc...) asparagine glycan is attached at asparagine 382. Histidine 419 is an active-site residue.

The protein belongs to the peptidase S10 family. As to expression, expressed in seedlings and roots.

It is found in the secreted. In terms of biological role, probable carboxypeptidase. The chain is Serine carboxypeptidase-like 1 (SCPL1) from Arabidopsis thaliana (Mouse-ear cress).